A 300-amino-acid chain; its full sequence is U1 small nuclear ribonucleoprotein 70 kDa homolog (300 aa).

Positions 107 to 198 constitute an RRM domain; that stretch reads RTIFIGRLPY…RTVKYFKPRR (92 aa). 2 disordered regions span residues 204–248 and 263–300; these read GGRG…AYSA and NRPL…APDY. A compositionally biased stretch (low complexity) spans 265-279; that stretch reads PLLSAATPTAAVTSV.

Component of the spliceosome, where it is associated with snRNP U1. Binds stem loop I of U1 snRNA. Interacts with mRNA.

It localises to the nucleus. Involved in nuclear mRNA splicing. The polypeptide is U1 small nuclear ribonucleoprotein 70 kDa homolog (SNP1) (Saccharomyces cerevisiae (strain ATCC 204508 / S288c) (Baker's yeast)).